Here is a 161-residue protein sequence, read N- to C-terminus: Large ribosomal subunit protein uL15 (161 aa).

The interval 1-44 is disordered; that stretch reads MKLSEIADNAGSRKKRMRVGRGIGSGKGKTAGRGGKGQTARSGV. Residues 21–37 show a composition bias toward gly residues; the sequence is RGIGSGKGKTAGRGGKG.

This sequence belongs to the universal ribosomal protein uL15 family. Part of the 50S ribosomal subunit.

Its function is as follows. Binds to the 23S rRNA. The protein is Large ribosomal subunit protein uL15 of Rhodopseudomonas palustris (strain BisA53).